Reading from the N-terminus, the 340-residue chain is Phenylalanine--tRNA ligase alpha subunit (340 aa).

Glu-255 serves as a coordination point for Mg(2+).

Belongs to the class-II aminoacyl-tRNA synthetase family. Phe-tRNA synthetase alpha subunit type 1 subfamily. As to quaternary structure, tetramer of two alpha and two beta subunits. It depends on Mg(2+) as a cofactor.

It is found in the cytoplasm. It carries out the reaction tRNA(Phe) + L-phenylalanine + ATP = L-phenylalanyl-tRNA(Phe) + AMP + diphosphate + H(+). The sequence is that of Phenylalanine--tRNA ligase alpha subunit from Desulfitobacterium hafniense (strain Y51).